The chain runs to 442 residues: ATP-dependent protease ATPase subunit HslU (442 aa).

ATP is bound by residues isoleucine 18 and 60–65 (GVGKTE). The interval 136–156 (LPKPKNDWDSTDSDANSNTRQ) is disordered. 3 residues coordinate ATP: aspartate 255, glutamate 320, and arginine 392.

It belongs to the ClpX chaperone family. HslU subfamily. As to quaternary structure, a double ring-shaped homohexamer of HslV is capped on each side by a ring-shaped HslU homohexamer. The assembly of the HslU/HslV complex is dependent on binding of ATP.

The protein localises to the cytoplasm. Functionally, ATPase subunit of a proteasome-like degradation complex; this subunit has chaperone activity. The binding of ATP and its subsequent hydrolysis by HslU are essential for unfolding of protein substrates subsequently hydrolyzed by HslV. HslU recognizes the N-terminal part of its protein substrates and unfolds these before they are guided to HslV for hydrolysis. This is ATP-dependent protease ATPase subunit HslU from Shewanella sp. (strain MR-7).